Consider the following 175-residue polypeptide: Ribosome maturation factor RimM (175 aa).

Residues 96–175 form the PRC barrel domain; it reads EGDYYWHDLI…TIEVDWDAGF (80 aa).

This sequence belongs to the RimM family. As to quaternary structure, binds ribosomal protein uS19.

It localises to the cytoplasm. In terms of biological role, an accessory protein needed during the final step in the assembly of 30S ribosomal subunit, possibly for assembly of the head region. Essential for efficient processing of 16S rRNA. May be needed both before and after RbfA during the maturation of 16S rRNA. It has affinity for free ribosomal 30S subunits but not for 70S ribosomes. This is Ribosome maturation factor RimM from Haemophilus influenzae (strain PittEE).